The following is a 572-amino-acid chain: MGQSTSKEHENARTNESKLKGESLMDFFNDRCLKQLTTAELISFKNNIPEGKELNDYVEVSDISRMYYIPKDSAVMLSVFMNMFHTLANFPLLQDSYEKVTFKTLLKATLLLVKERAIKYTDWKKYNDLKMLFITLSLEKNIKAEPLMDSSALSDCKDWKGVIRSYNGTDFDELKVNANNLLHFLALILALSRCCILNNCKIDNDVLAKSLEDFKHQALNIVRTMNPEIISMSDCLDSSITYTQFSMAVNDVAPNLLNPLKMLMEHVLYMDRDLVDADVLQPISNPTKIVNESELSQLATFLPKEIVFSRFQKLYVGRESGFSMRSFQSKVFKWMAPTILFVEGMRIRDEDDEDGDAYAVKNPRYRNFLQEYGKLKSEDQHLDTLSKKKRKLLFAVCIRDPWKVSNKDLFGDSSTKIIQLHPRQEIFDADPFKTGNVYFNTVGGGIGIGSSQPIIKANGKKYFPGNVSLTIDSSLEFGIFRHLGAGGSFKPGRLISGRGEERNSFEYRFIIQDVEVWGCGGEKELEEQVKQWQWEEAEAKRRQKINLQSMGEDRALLEMAGLVGQHQSGGSI.

In terms of domain architecture, TLDc spans 288–520; it reads KIVNESELSQ…IQDVEVWGCG (233 aa).

Belongs to the RTC5 family.

The protein resides in the cytoplasm. May be involved in a process influencing telomere capping. The sequence is that of Restriction of telomere capping protein 5 (RTC5) from Kluyveromyces lactis (strain ATCC 8585 / CBS 2359 / DSM 70799 / NBRC 1267 / NRRL Y-1140 / WM37) (Yeast).